A 195-amino-acid chain; its full sequence is MSSIKLIVGLANPGAEYAATRHNAGAWFVDRLAESYRQSLKEESKFFGYTSRLNLAGQDVRLLVPTTFMNLSGKAVAAMATFYRIQPDEILVAHDELDLLPGIAKLKLGGGHGGHNGLKDIISKLGNNPNFHRLRIGIGHPGDKSKVTGFVLGKPPMSEQTLIDEAIDEAVRCTEILMKEDMIKAMNRLHAFKAA.

A tRNA-binding site is contributed by Tyr17. Catalysis depends on His22, which acts as the Proton acceptor. Positions 68, 70, and 116 each coordinate tRNA.

The protein belongs to the PTH family. Monomer.

The protein resides in the cytoplasm. The catalysed reaction is an N-acyl-L-alpha-aminoacyl-tRNA + H2O = an N-acyl-L-amino acid + a tRNA + H(+). Functionally, hydrolyzes ribosome-free peptidyl-tRNAs (with 1 or more amino acids incorporated), which drop off the ribosome during protein synthesis, or as a result of ribosome stalling. Its function is as follows. Catalyzes the release of premature peptidyl moieties from peptidyl-tRNA molecules trapped in stalled 50S ribosomal subunits, and thus maintains levels of free tRNAs and 50S ribosomes. The sequence is that of Peptidyl-tRNA hydrolase from Pectobacterium atrosepticum (strain SCRI 1043 / ATCC BAA-672) (Erwinia carotovora subsp. atroseptica).